The sequence spans 75 residues: uncharacterized protein (75 aa).

The LysM domain occupies 29 to 72; that stretch reads EVYHVESGDTLWTIAKSFEIPVQQLMNLNKLSSDRIYPGQIIKI.

This is an uncharacterized protein from Bacillus subtilis (strain 168).